We begin with the raw amino-acid sequence, 227 residues long: Cytochrome c oxidase subunit 2 (227 aa).

At 1–14 (MAYPFQLGLXDATS) the chain is on the mitochondrial intermembrane side. A helical transmembrane segment spans residues 15–45 (PIMEELLHFHDHTLMIVFLISSLVLYIITLM). Residues 46 to 59 (LTTKLTHTSTMDAQ) lie on the Mitochondrial matrix side of the membrane. A helical transmembrane segment spans residues 60-87 (EVETVWTILPAIILILIALPSLRILYMM). Residues 88–227 (DEINNPSLTV…YFETWSAVMV (140 aa)) are Mitochondrial intermembrane-facing. Residues His161, Cys196, Glu198, Cys200, His204, and Met207 each coordinate Cu cation. Mg(2+) is bound at residue Glu198.

Belongs to the cytochrome c oxidase subunit 2 family. In terms of assembly, component of the cytochrome c oxidase (complex IV, CIV), a multisubunit enzyme composed of 14 subunits. The complex is composed of a catalytic core of 3 subunits MT-CO1, MT-CO2 and MT-CO3, encoded in the mitochondrial DNA, and 11 supernumerary subunits COX4I, COX5A, COX5B, COX6A, COX6B, COX6C, COX7A, COX7B, COX7C, COX8 and NDUFA4, which are encoded in the nuclear genome. The complex exists as a monomer or a dimer and forms supercomplexes (SCs) in the inner mitochondrial membrane with NADH-ubiquinone oxidoreductase (complex I, CI) and ubiquinol-cytochrome c oxidoreductase (cytochrome b-c1 complex, complex III, CIII), resulting in different assemblies (supercomplex SCI(1)III(2)IV(1) and megacomplex MCI(2)III(2)IV(2)). Found in a complex with TMEM177, COA6, COX18, COX20, SCO1 and SCO2. Interacts with TMEM177 in a COX20-dependent manner. Interacts with COX20. Interacts with COX16. Cu cation serves as cofactor.

Its subcellular location is the mitochondrion inner membrane. The enzyme catalyses 4 Fe(II)-[cytochrome c] + O2 + 8 H(+)(in) = 4 Fe(III)-[cytochrome c] + 2 H2O + 4 H(+)(out). Its function is as follows. Component of the cytochrome c oxidase, the last enzyme in the mitochondrial electron transport chain which drives oxidative phosphorylation. The respiratory chain contains 3 multisubunit complexes succinate dehydrogenase (complex II, CII), ubiquinol-cytochrome c oxidoreductase (cytochrome b-c1 complex, complex III, CIII) and cytochrome c oxidase (complex IV, CIV), that cooperate to transfer electrons derived from NADH and succinate to molecular oxygen, creating an electrochemical gradient over the inner membrane that drives transmembrane transport and the ATP synthase. Cytochrome c oxidase is the component of the respiratory chain that catalyzes the reduction of oxygen to water. Electrons originating from reduced cytochrome c in the intermembrane space (IMS) are transferred via the dinuclear copper A center (CU(A)) of subunit 2 and heme A of subunit 1 to the active site in subunit 1, a binuclear center (BNC) formed by heme A3 and copper B (CU(B)). The BNC reduces molecular oxygen to 2 water molecules using 4 electrons from cytochrome c in the IMS and 4 protons from the mitochondrial matrix. In Vulpes corsac (Corsac fox), this protein is Cytochrome c oxidase subunit 2 (MT-CO2).